A 299-amino-acid polypeptide reads, in one-letter code: Taste receptor type 2 member 50 (299 aa).

Met1 is a topological domain (extracellular). The helical transmembrane segment at 2-22 threads the bilayer; sequence ITFLYIFFSILIMVLFVLGNF. Residues 23 to 55 are Cytoplasmic-facing; the sequence is ANGFIALVNFIDWVKRKKISSADQILTALAVSR. The helical transmembrane segment at 56 to 76 threads the bilayer; the sequence is IGLLWALLLNWYLTVLNPAFY. Topologically, residues 77–87 are extracellular; it reads SVELRITSYNA. Residues 88-108 form a helical membrane-spanning segment; sequence WVVTNHFSMWLAANLSIFYLL. Topologically, residues 109–126 are cytoplasmic; the sequence is KIANFSNLLFLHLKRRVR. A helical transmembrane segment spans residues 127–147; the sequence is SVILVILLGTLIFLVCHLLVA. The Extracellular portion of the chain corresponds to 148–181; sequence NMDESMWAEEYEGNMTGKMKLRNTVHLSYLTVTT. Residue Asn161 is glycosylated (N-linked (GlcNAc...) asparagine). The chain crosses the membrane as a helical span at residues 182 to 202; sequence LWSFIPFTLSLISFLMLICSL. Over 203 to 229 the chain is Cytoplasmic; sequence CKHLKKMQLHGEGSQDLSTKVHIKALQ. Residues 230–250 traverse the membrane as a helical segment; it reads TLISFLLLCAIFFLFLIVSVW. The Extracellular segment spans residues 251–259; sequence SPRRLRNDP. The helical transmembrane segment at 260–280 threads the bilayer; sequence VVMVSKAVGNIYLAFDSFILI. Topologically, residues 281–299 are cytoplasmic; that stretch reads WRTKKLKHTFLLILCQIRC.

The protein belongs to the G-protein coupled receptor T2R family. As to expression, expressed in subsets of taste receptor cells of the tongue and exclusively in gustducin-positive cells.

It localises to the membrane. In terms of biological role, receptor that may play a role in the perception of bitterness and is gustducin-linked. May play a role in sensing the chemical composition of the gastrointestinal content. The activity of this receptor may stimulate alpha gustducin, mediate PLC-beta-2 activation and lead to the gating of TRPM5. In Homo sapiens (Human), this protein is Taste receptor type 2 member 50 (TAS2R50).